We begin with the raw amino-acid sequence, 542 residues long: E3 ubiquitin-protein ligase RNF217 (542 aa).

Disordered stretches follow at residues 1-140 (MGEE…TRVG) and 176-216 (APAS…TDSL). Over residues 37 to 50 (SARAPPLRAASAEP) the composition is skewed to low complexity. The segment covering 122 to 132 (DEQQEAPPGEE) has biased composition (acidic residues). Positions 185–196 (PASPPGAPPVLN) are enriched in pro residues. The span at 197 to 213 (PPSTRSSFPSPRLSLPT) shows a compositional bias: low complexity. Residues 259–478 (MVLMCRVCLE…LSIFGCKYRY (220 aa)) form a TRIAD supradomain region. Residues C263, C266, C283, C286, C383, C386, H391, C396, C423, and C426 each contribute to the Zn(2+) site. An RING-type 1 zinc finger spans residues 263–309 (CRVCLEDKPIKPLPCCKKAVCEECLKVYLSAQVQLGQVEIKCPITEC). The IBR-type zinc finger occupies 328–396 (IKYKYFLELG…HSPWHEGVNC (69 aa)). The RING-type 2; atypical zinc-finger motif lies at 423-452 (CPKCKIHIQRTEGCDHMTCSQCNTNFCYRC). The active site involves C436. Positions 441, 444, 449, 452, 465, and 474 each coordinate Zn(2+). The chain crosses the membrane as a helical span at residues 503–523 (LIMVLGLALGAIAVVIGLFVF).

This sequence belongs to the RBR family. RNF217 subfamily. Interacts with HAX1. In terms of tissue distribution, mainly expressed in testis and skeletal muscle.

It is found in the membrane. Its subcellular location is the cytoplasm. It catalyses the reaction [E2 ubiquitin-conjugating enzyme]-S-ubiquitinyl-L-cysteine + [acceptor protein]-L-lysine = [E2 ubiquitin-conjugating enzyme]-L-cysteine + [acceptor protein]-N(6)-ubiquitinyl-L-lysine.. Its pathway is protein modification; protein ubiquitination. In terms of biological role, E3 ubiquitin-protein ligase which accepts ubiquitin from E2 ubiquitin-conjugating enzymes in the form of a thioester and then directly transfers the ubiquitin to targeted substrates. Mediates the degradation of the iron exporter ferroportin/SLC40A1 and thus regulates iron homeostasis. This is E3 ubiquitin-protein ligase RNF217 (RNF217) from Homo sapiens (Human).